The primary structure comprises 226 residues: ATP-dependent dethiobiotin synthetase BioD (226 aa).

Thr19 is a Mg(2+) binding site. The active site involves Lys40. Residues Asp53 and Glu114 each coordinate Mg(2+). Residues Asp53, 114-117 (EGAG), and 174-175 (NR) contribute to the ATP site.

It belongs to the dethiobiotin synthetase family. Homodimer. Mg(2+) is required as a cofactor.

The protein localises to the cytoplasm. The enzyme catalyses (7R,8S)-7,8-diammoniononanoate + CO2 + ATP = (4R,5S)-dethiobiotin + ADP + phosphate + 3 H(+). It participates in cofactor biosynthesis; biotin biosynthesis; biotin from 7,8-diaminononanoate: step 1/2. Catalyzes a mechanistically unusual reaction, the ATP-dependent insertion of CO2 between the N7 and N8 nitrogen atoms of 7,8-diaminopelargonic acid (DAPA, also called 7,8-diammoniononanoate) to form a ureido ring. This is ATP-dependent dethiobiotin synthetase BioD from Nitrosospira multiformis (strain ATCC 25196 / NCIMB 11849 / C 71).